The following is a 244-amino-acid chain: Carboxy-S-adenosyl-L-methionine synthase (244 aa).

S-adenosyl-L-methionine is bound by residues Tyr41, 66–68 (GCS), Asn134, and Arg201.

The protein belongs to the class I-like SAM-binding methyltransferase superfamily. Cx-SAM synthase family. As to quaternary structure, homodimer.

The enzyme catalyses prephenate + S-adenosyl-L-methionine = carboxy-S-adenosyl-L-methionine + 3-phenylpyruvate + H2O. Its function is as follows. Catalyzes the conversion of S-adenosyl-L-methionine (SAM) to carboxy-S-adenosyl-L-methionine (Cx-SAM). This is Carboxy-S-adenosyl-L-methionine synthase from Cellvibrio japonicus (strain Ueda107) (Pseudomonas fluorescens subsp. cellulosa).